Here is a 686-residue protein sequence, read N- to C-terminus: Mitochondrial Rho GTPase 1 (686 aa).

Residues 1 to 648 (MPRRDLVRIV…PAQRIRVVAR (648 aa)) lie on the Cytoplasmic side of the membrane. Residues 4-172 (RDLVRIVLVG…FYFAQKAVLH (169 aa)) enclose the Miro 1 domain. Residues 13 to 20 (GDDGVGKS), 59 to 63 (DTSSN), and 117 to 120 (NKID) each bind GTP. 2 EF-hand domains span residues 188–223 (KCLE…CFST) and 341–376 (LGNQ…SPGN). Positions 201, 203, 205, 212, 354, 356, 358, and 365 each coordinate Ca(2+). A Miro 2 domain is found at 455–624 (RNVFLCYVLG…WVAITRVALD (170 aa)). Residues 464-471 (GATGSGKT), 506-510 (EMEGV), and 574-577 (TKSD) contribute to the GTP site. A helical; Anchor for type IV membrane protein transmembrane segment spans residues 649 to 665 (WGLAATTISAIVAVWMK). Residues 666–686 (WQGYSFKGIWGWMAKFAGLRT) are Mitochondrial intermembrane-facing.

It belongs to the mitochondrial Rho GTPase family.

The protein localises to the mitochondrion outer membrane. Its function is as follows. Mitochondrial GTPase involved in mitochondrial trafficking. Probably involved in control of anterograde transport of mitochondria and their subcellular distribution. This is Mitochondrial Rho GTPase 1 (GEM1) from Cryptococcus neoformans var. neoformans serotype D (strain B-3501A) (Filobasidiella neoformans).